The following is a 179-amino-acid chain: Large ribosomal subunit protein uL5 (179 aa).

It belongs to the universal ribosomal protein uL5 family. As to quaternary structure, part of the 50S ribosomal subunit; part of the 5S rRNA/L5/L18/L25 subcomplex. Contacts the 5S rRNA and the P site tRNA. Forms a bridge to the 30S subunit in the 70S ribosome.

In terms of biological role, this is one of the proteins that bind and probably mediate the attachment of the 5S RNA into the large ribosomal subunit, where it forms part of the central protuberance. In the 70S ribosome it contacts protein S13 of the 30S subunit (bridge B1b), connecting the 2 subunits; this bridge is implicated in subunit movement. Contacts the P site tRNA; the 5S rRNA and some of its associated proteins might help stabilize positioning of ribosome-bound tRNAs. The polypeptide is Large ribosomal subunit protein uL5 (Janthinobacterium sp. (strain Marseille) (Minibacterium massiliensis)).